The chain runs to 254 residues: Ciliary microtubule associated protein 1A (254 aa).

2 STPGR repeats span residues 180 to 205 and 216 to 241; these read PGPAAYRQTEVQVTKFKAPQYTMAAR and PGPGAHSPEKVTLNKPCAPTVTFGIK. Residues 207-228 are disordered; the sequence is EPPGDKTLKPGPGAHSPEKVTL.

Belongs to the CIMAP family. Microtubule inner protein component of sperm flagellar doublet microtubules. In terms of tissue distribution, testis-specific (at protein level). Expression restricted to the germ cell fraction, absent in somatic cell fractions such as Sertoli and Leydig cells. Expression detected in the third week postpartum (23 days) after haploid germ cells developed, expression increased with age. Expressed in the tails of elongated spermatids sticking out toward the tubular lumen, and in cytoplasmic droplets still attached to the spermatid tail membrane. Expressed in the tails of mature sperm, from the connecting piece proximal to the head, along the middle and principal pieces, down to the distal end piece.

Its subcellular location is the cytoplasm. The protein resides in the cytoskeleton. It is found in the flagellum axoneme. Outer dense fibers are filamentous structures located on the outside of the axoneme in the midpiece and principal piece of the mammalian sperm tail. May help to maintain the passive elastic structures and elastic recoil of the sperm tail. This Mus musculus (Mouse) protein is Ciliary microtubule associated protein 1A (Cimap1a).